A 291-amino-acid polypeptide reads, in one-letter code: N-acetylmannosamine kinase (291 aa).

ATP is bound by residues 5-12 and 132-139; these read AIDIGGTK and GVGGGVVC. Positions 156, 166, 168, and 173 each coordinate Zn(2+).

It belongs to the ROK (NagC/XylR) family. NanK subfamily. Homodimer.

It catalyses the reaction an N-acyl-D-mannosamine + ATP = an N-acyl-D-mannosamine 6-phosphate + ADP + H(+). It participates in amino-sugar metabolism; N-acetylneuraminate degradation; D-fructose 6-phosphate from N-acetylneuraminate: step 2/5. Catalyzes the phosphorylation of N-acetylmannosamine (ManNAc) to ManNAc-6-P. The protein is N-acetylmannosamine kinase of Salmonella heidelberg (strain SL476).